A 183-amino-acid polypeptide reads, in one-letter code: Transcription factor 15 (183 aa).

The disordered stretch occupies residues 24–46 (DEENRSESDTSDQSYGCCEGAEA). One can recognise a bHLH domain in the interval 61 to 113 (KQRQAANARERDRTQSVNTAFTALRTLIPTEPVDRKLSKIETLRLASSYIAHL).

In terms of assembly, heterodimer; efficient DNA binding requires dimerization with another bHLH protein.

Its subcellular location is the nucleus. Its function is as follows. Early transcription factor that plays a key role in somitogenesis, paraxial mesoderm development and regulation of stem cell pluripotency. Essential for the mesenchymal to epithelial transition associated with somite formation. Required for somite morphogenesis, thereby regulating patterning of the axial skeleton and skeletal muscles. Also plays a key role in regulation of stem cell pluripotency. Promotes pluripotency exit of embryonic stem cells (ESCs) by priming ESCs for differentiation. Acts as a key regulator of self-renewal of hematopoietic stem cells (HSCs) by mediating HSCs quiescence and long-term self-renewal. Acts by forming a heterodimer with another helix-loop-helix (bHLH) protein, that binds DNA on E-box motifs (5'-CANNTG-3') and activates transcription of target genes. This Gallus gallus (Chicken) protein is Transcription factor 15 (TCF15).